The primary structure comprises 331 residues: L-lactate dehydrogenase A chain (331 aa).

NAD(+) is bound by residues 29-57 and arginine 98; that span reads GMVG…MEDK. Residues arginine 105, asparagine 137, and arginine 168 each coordinate substrate. Residue asparagine 137 participates in NAD(+) binding. Histidine 192 (proton acceptor) is an active-site residue. A substrate-binding site is contributed by threonine 247.

The protein belongs to the LDH/MDH superfamily. LDH family. As to quaternary structure, homotetramer.

It localises to the cytoplasm. It carries out the reaction (S)-lactate + NAD(+) = pyruvate + NADH + H(+). It participates in fermentation; pyruvate fermentation to lactate; (S)-lactate from pyruvate: step 1/1. Interconverts simultaneously and stereospecifically pyruvate and lactate with concomitant interconversion of NADH and NAD(+). The protein is L-lactate dehydrogenase A chain (ldha) of Champsocephalus gunnari (Mackerel icefish).